The following is a 279-amino-acid chain: S-formylglutathione hydrolase (279 aa).

Residues S150, D226, and H258 each act as charge relay system in the active site.

It belongs to the esterase D family.

The catalysed reaction is S-formylglutathione + H2O = formate + glutathione + H(+). Its function is as follows. Serine hydrolase involved in the detoxification of formaldehyde. Hydrolyzes S-formylglutathione to glutathione and formate. This is S-formylglutathione hydrolase (fghA) from Paracoccus denitrificans (strain Pd 1222).